Here is a 286-residue protein sequence, read N- to C-terminus: MNFRQLIFKILYNENNMKKFLLKPKKSLGQNFILSSEITKKIVALAGSLENFNVIEIGPGYGALTREILVHNPKSLLSIEKDRDLVKHHDQLLNEHQGKYRIIEADALHIIEEELIERPVKVIANLPYNISVALFLKWLDSIKFFTSLTLMFQKEVADRITARPNSKDYGPLSVLSQLLCDIKKEFDIEPKEFFPRPKIHSSVITVNPLPTPKFVVNLETLIKLIRAVFAQRRKMLRNSLQNITNHAETVLENAKLSGNERPENLTIEQFCLLANNVECLLCNKMY.

Residues asparagine 31, isoleucine 33, glycine 58, glutamate 80, aspartate 106, and asparagine 125 each coordinate S-adenosyl-L-methionine.

It belongs to the class I-like SAM-binding methyltransferase superfamily. rRNA adenine N(6)-methyltransferase family. RsmA subfamily.

It localises to the cytoplasm. It carries out the reaction adenosine(1518)/adenosine(1519) in 16S rRNA + 4 S-adenosyl-L-methionine = N(6)-dimethyladenosine(1518)/N(6)-dimethyladenosine(1519) in 16S rRNA + 4 S-adenosyl-L-homocysteine + 4 H(+). Functionally, specifically dimethylates two adjacent adenosines (A1518 and A1519) in the loop of a conserved hairpin near the 3'-end of 16S rRNA in the 30S particle. May play a critical role in biogenesis of 30S subunits. This Wolbachia pipientis wMel protein is Ribosomal RNA small subunit methyltransferase A.